A 415-amino-acid chain; its full sequence is Adenylosuccinate synthetase (415 aa).

GTP contacts are provided by residues 12 to 18 (GDEGKGK) and 40 to 42 (GHT). Aspartate 13 (proton acceptor) is an active-site residue. Residues aspartate 13 and glycine 40 each contribute to the Mg(2+) site. Residues 13-16 (DEGK), 38-41 (NAGH), threonine 125, arginine 139, glutamine 219, threonine 234, and arginine 298 contribute to the IMP site. Histidine 41 acts as the Proton donor in catalysis. Residue 294–300 (TTTGRPR) coordinates substrate. Residues arginine 300, 326 to 328 (KLD), and 404 to 406 (STG) each bind GTP.

Belongs to the adenylosuccinate synthetase family. As to quaternary structure, homodimer. Mg(2+) serves as cofactor.

It localises to the cytoplasm. The enzyme catalyses IMP + L-aspartate + GTP = N(6)-(1,2-dicarboxyethyl)-AMP + GDP + phosphate + 2 H(+). It functions in the pathway purine metabolism; AMP biosynthesis via de novo pathway; AMP from IMP: step 1/2. In terms of biological role, plays an important role in the de novo pathway of purine nucleotide biosynthesis. Catalyzes the first committed step in the biosynthesis of AMP from IMP. The protein is Adenylosuccinate synthetase of Wolinella succinogenes (strain ATCC 29543 / DSM 1740 / CCUG 13145 / JCM 31913 / LMG 7466 / NCTC 11488 / FDC 602W) (Vibrio succinogenes).